The sequence spans 571 residues: uncharacterized protein (571 aa).

Residues 1-3 lie on the Cytoplasmic side of the membrane; that stretch reads MNS. Residues 4-24 traverse the membrane as a helical segment; the sequence is LQILSFVGFTLLVAVITWWKV. At 25 to 74 the chain is on the periplasmic side; sequence RKTDTGSQQGYFLAGRSLKAPVIAASLMLTNLSTEQLVGLSGQAYKSGMS. Residues 75–95 form a helical membrane-spanning segment; the sequence is VMGWEVTSAVTLIFLALIFLP. Residues 96-118 lie on the Cytoplasmic side of the membrane; it reads RYLKRGIATIPDFLEERYDKTTR. A helical membrane pass occupies residues 119–139; the sequence is IIIDFCFLIATGVCFLPIVLY. At 140-162 the chain is on the periplasmic side; sequence SGALALNSLFHVGESLQISHGAA. Residues 163–183 form a helical membrane-spanning segment; that stretch reads IWLLVILLGLAGILYAVIGGL. Topologically, residues 184–191 are cytoplasmic; sequence RAMAVADS. A helical transmembrane segment spans residues 192-212; sequence INGIGLVIGGLMVPVFGLIAM. Residues 213 to 240 lie on the Periplasmic side of the membrane; that stretch reads GKGSFMQGIEQLTTVHAEKLNSIGGPTD. The chain crosses the membrane as a helical span at residues 241-261; it reads PLPIGAAFTGLILVNTFYWCT. Topologically, residues 262–283 are cytoplasmic; sequence NQGIVQRTLASKSLAEGQKGAL. Residues 284–304 form a helical membrane-spanning segment; it reads LTAVLKMLDPLVLVLPGLIAF. Topologically, residues 305–324 are periplasmic; that stretch reads HLYQDLPKADMAYPTLVNNV. Residues 325–345 traverse the membrane as a helical segment; that stretch reads LPVPMVGFFGAVLFGAVISTF. Residues 346–380 are Cytoplasmic-facing; it reads NGFLNSASTLFSMGIYRRIINQNAEPQQLVTVGRK. The helical transmembrane segment at 381 to 401 threads the bilayer; the sequence is FGFFIAIVSVLVAPWIANAPQ. At 402-415 the chain is on the periplasmic side; sequence GLYSWMKQLNGIYN. The chain crosses the membrane as a helical span at residues 416 to 436; the sequence is VPLVTIIIMGFFFPRIPALAA. Position 437 (lysine 437) is a topological domain, cytoplasmic. The helical transmembrane segment at 438 to 458 threads the bilayer; sequence VAMGIGIISYITINYLVKFDF. The Periplasmic portion of the chain corresponds to 459-460; that stretch reads HF. The chain crosses the membrane as a helical span at residues 461–481; that stretch reads LYVLACTFCINVVVMLVIGFI. The Cytoplasmic segment spans residues 482–505; sequence KPRATPFTFKDAFAVDMKPWKNVK. The helical transmembrane segment at 506-526 threads the bilayer; it reads IASIGILFAMIGVYAGLAEFG. Residues 527-532 are Periplasmic-facing; it reads GYGTRW. Residues 533–553 form a helical membrane-spanning segment; the sequence is LAMISYFIAAVVIVYLIFDSW. At 554–571 the chain is on the cytoplasmic side; that stretch reads RHRHDPAVTFTPDGKDSL.

This sequence belongs to the sodium:solute symporter (SSF) (TC 2.A.21) family.

It localises to the cell inner membrane. This is an uncharacterized protein from Escherichia coli (strain K12).